A 484-amino-acid chain; its full sequence is Threonine synthase-like 2 (484 aa).

Lysine 113 is subject to N6-(pyridoxal phosphate)lysine.

It belongs to the threonine synthase family. Requires pyridoxal 5'-phosphate as cofactor.

It localises to the secreted. Functionally, acts as a catabolic phospho-lyase on both gamma- and beta-phosphorylated substrates. Degrades O-phospho-threonine (PThr) to alpha-ketobutyrate, ammonia and phosphate. In terms of biological role, potent inducer of osteoblastic production of IL6. May act to exacerbate inflammation and/or bone turnover under inflammatory conditions. This is Threonine synthase-like 2 (THNSL2) from Homo sapiens (Human).